Here is a 186-residue protein sequence, read N- to C-terminus: Ribosome-recycling factor (186 aa).

It belongs to the RRF family.

It is found in the cytoplasm. Its function is as follows. Responsible for the release of ribosomes from messenger RNA at the termination of protein biosynthesis. May increase the efficiency of translation by recycling ribosomes from one round of translation to another. This is Ribosome-recycling factor from Cupriavidus taiwanensis (strain DSM 17343 / BCRC 17206 / CCUG 44338 / CIP 107171 / LMG 19424 / R1) (Ralstonia taiwanensis (strain LMG 19424)).